A 296-amino-acid polypeptide reads, in one-letter code: MATERNRRRKGSYPQLPPAPDDYPTFPDKSTWPVVFPEIPAGTNGRFARPPQHTSKEAAPQIPADQVPQHVAVVMDGNGRWATQRGLGRTEGHKMGEAVLIDITCGAIEIGIKHLTVYAFSTENWKRSTEEVRFLMGFNREVVRRRRENLNDMGVRMRWVGSRPRMWSSVIKEFDIAEQMTVDNDVITINYCVNYGGRTEIVEAARELAQEAVDGKIKPNRISEAQFAKHLHRSDIPDVDLFIRTSGEQRASNFLLWQAAYAEYVFQDKLWPDYDRRDLWAACEEYVQRNRRFGRA.

The span at Met-1–Gly-11 shows a compositional bias: basic residues. A disordered region spans residues Met-1–Lys-29. Asp-76 is a catalytic residue. Residue Asp-76 coordinates Mg(2+). Substrate-binding positions include Gly-77–Arg-80, Trp-81, Arg-89, His-93, and Ser-121–Glu-123. Residue Asn-124 is the Proton acceptor of the active site. Substrate is bound by residues Trp-125, Arg-127, Arg-244, and Arg-250 to Ser-252. Glu-263 provides a ligand contact to Mg(2+).

Belongs to the UPP synthase family. As to quaternary structure, homodimer. The cofactor is Mg(2+).

Functionally, catalyzes the condensation of isopentenyl diphosphate (IPP) with allylic pyrophosphates generating different type of terpenoids. The chain is Isoprenyl transferase from Mycolicibacterium parafortuitum (Mycobacterium parafortuitum).